The chain runs to 247 residues: Uridylate kinase (247 aa).

18 to 21 (KLSG) provides a ligand contact to ATP. Position 60 (Gly-60) interacts with UMP. Gly-61 and Arg-65 together coordinate ATP. UMP-binding positions include Asp-80 and 141–148 (TGNPFFTT). ATP contacts are provided by Thr-168, Tyr-174, and Asp-177.

Belongs to the UMP kinase family. As to quaternary structure, homohexamer.

The protein localises to the cytoplasm. The enzyme catalyses UMP + ATP = UDP + ADP. It functions in the pathway pyrimidine metabolism; CTP biosynthesis via de novo pathway; UDP from UMP (UMPK route): step 1/1. Its activity is regulated as follows. Inhibited by UTP. Functionally, catalyzes the reversible phosphorylation of UMP to UDP. The sequence is that of Uridylate kinase from Stutzerimonas stutzeri (strain A1501) (Pseudomonas stutzeri).